The sequence spans 508 residues: Cytochrome P450 monooxygenase tenA (508 aa).

A helical membrane pass occupies residues 8–24 (VSLPYLILSACLSVILL). Residue Cys-456 coordinates heme.

This sequence belongs to the cytochrome P450 family. Heme serves as cofactor.

It is found in the membrane. The protein operates within secondary metabolite biosynthesis. In terms of biological role, cytochrome P450 monooxygenase; part of the gene cluster that mediates the biosynthesis of tenellin-type 2-pyridones, iron-chelating compounds involved in iron stress tolerance, competition with the natural competitor fungus Metarhizium robertsii and insect hosts infection. TenA catalyzes an oxidative ring expansion of pretenellin A and 14-hydropretellenin A to form the 2-pyridone core, leading to the production of pretenellin B and pyridovericin, respectively. The pathway begins with the assembly of the polyketide-amino acid backbone by the hybrid PKS-NRPS tenS with the help of the enoyl reductase tenC. These enzymes catalyze the synthesis of the pyrrolidine-2-dione intermediates pretellinin A, 11-hydropretellenin A, 12-hydropretellenin A, 13-hydropretellenin A, 14-hydropretellenin A, 12-oxopretellenin A and prototellinin D. The cytochrome P450 monooxygenase tenA then catalyzes an oxidative ring expansion of pretenellin A and 14-hydropretellenin A to form the 2-pyridone core, leading to pretenellin B and pyridovericin, respectively. The cytochrome P450 monooxygenase tenB is then required for the selective N-hydroxylation of the 2-pyridone nitrogen of yield tellinin and 15-hydroxytellenin (15-HT), respectively. The UDP-glucosyltransferase GT1 and the methyltransferase MT1, located outside the tenS gene cluster, contribute to the stepwise glycosylation and methylation of 15-HT to obtain the glycoside pyridovericin-N-O-(4-O-methyl-beta-D-glucopyranoside) (PMGP). Additional related compounds such as 1-O-methyl-15-HT, (8Z)-1-O-methyl-15-HT, and O-methyltenellin A are also produced but the enzymes involved in their biosynthesis have still to be determined. In Beauveria bassiana (White muscardine disease fungus), this protein is Cytochrome P450 monooxygenase tenA.